An 867-amino-acid polypeptide reads, in one-letter code: Ent-copalyl diphosphate synthase 1, chloroplastic (867 aa).

Residues Met-1–Arg-35 constitute a chloroplast transit peptide. The tract at residues Met-1–Gln-134 is disordered. Residues Arg-51–Asp-64 show a composition bias toward basic and acidic residues. Residues Ala-74–Ser-89 are compositionally biased toward low complexity. The segment covering Ile-99–Gln-121 has biased composition (basic and acidic residues). A compositionally biased stretch (acidic residues) spans Glu-124–Leu-133. Residue Lys-286 participates in substrate binding. Residues Glu-418 to Asp-421 carry the DXDD motif motif. Lys-504 lines the substrate pocket.

The protein belongs to the terpene synthase family. Mg(2+) is required as a cofactor.

It is found in the plastid. The protein resides in the chloroplast. It carries out the reaction (2E,6E,10E)-geranylgeranyl diphosphate = ent-copalyl diphosphate. The protein operates within plant hormone biosynthesis; gibberellin biosynthesis. Functionally, catalyzes the conversion of geranylgeranyl diphosphate to the gibberellin precursor ent-copalyl diphosphate. This chain is Ent-copalyl diphosphate synthase 1, chloroplastic (CPS1), found in Oryza sativa subsp. japonica (Rice).